Here is a 38-residue protein sequence, read N- to C-terminus: Photosystem II reaction center protein T (38 aa).

The chain crosses the membrane as a helical span at residues 3–23 (ALVYTFLLVSTLGIIFFAIFF).

It belongs to the PsbT family. In terms of assembly, PSII is composed of 1 copy each of membrane proteins PsbA, PsbB, PsbC, PsbD, PsbE, PsbF, PsbH, PsbI, PsbJ, PsbK, PsbL, PsbM, PsbT, PsbY, PsbZ, Psb30/Ycf12, at least 3 peripheral proteins of the oxygen-evolving complex and a large number of cofactors. It forms dimeric complexes.

The protein localises to the plastid. The protein resides in the chloroplast thylakoid membrane. Its function is as follows. Found at the monomer-monomer interface of the photosystem II (PS II) dimer, plays a role in assembly and dimerization of PSII. PSII is a light-driven water plastoquinone oxidoreductase, using light energy to abstract electrons from H(2)O, generating a proton gradient subsequently used for ATP formation. This chain is Photosystem II reaction center protein T, found in Secale cereale (Rye).